Here is a 150-residue protein sequence, read N- to C-terminus: UPF0178 protein PputW619_5044 (150 aa).

The protein belongs to the UPF0178 family.

This Pseudomonas putida (strain W619) protein is UPF0178 protein PputW619_5044.